The primary structure comprises 378 residues: MGELGEHRSRSSLLSIPVLDTKTSGGSEYRESDGSLDLQSTLFEDHWLQSSQATTERNTDDPEEEIPPEEMVGEELPEVSNLEDSLRRDLEVEVVGMSHLSINERTTPTTSSAKCRKKKNHRLLELAKPKFNWQCLKDRTGRCCKGHVWISPRKTNLQFCLYWPSVYWTERFIEDTTLTITVPEVSRRVEELSRPKRFYQEYYNNNRTTPIWPIPRSTLEYQASNRLKRLATPKIRNNIWSINMSEVSQVSRAAQMAVPTPRTLRLAKPRAPATLLEEWDPMPKPKPYVSDYNRLLQLATPKALSEKCVPDRSPQWEVLNVTKNAVASSRIISLAQPKIRKDLNEGYNPYYISPASLVAQASPRIYELAVPKHITKKV.

Disordered regions lie at residues 1 to 35 (MGELGEHRSRSSLLSIPVLDTKTSGGSEYRESDGS) and 47 to 79 (WLQSSQATTERNTDDPEEEIPPEEMVGEELPEV). Polar residues predominate over residues 47–56 (WLQSSQATTE). A compositionally biased stretch (acidic residues) spans 61 to 77 (DPEEEIPPEEMVGEELP). 7 THEG repeats span residues 113–132 (AKCRKKKNHRLLELAKPKFN), 179–198 (TITVPEVSRRVEELSRPKRF), 217–236 (STLEYQASNRLKRLATPKIR), 253–272 (AAQMAVPTPRTLRLAKPRAP), 285–304 (PKPYVSDYNRLLQLATPKAL), 321–340 (VTKNAVASSRIISLAQPKIR), and 355–374 (ASLVAQASPRIYELAVPKHI). S290 is modified (phosphoserine).

As to quaternary structure, interacts with CCT5.

It is found in the nucleus. May be involved (but not essential) in spermatogenesis. This Rattus norvegicus (Rat) protein is Sperm microtubule associated protein 2.